Consider the following 169-residue polypeptide: Transcription antitermination protein NusB (169 aa).

It belongs to the NusB family.

Involved in transcription antitermination. Required for transcription of ribosomal RNA (rRNA) genes. Binds specifically to the boxA antiterminator sequence of the ribosomal RNA (rrn) operons. In Rhodococcus opacus (strain B4), this protein is Transcription antitermination protein NusB.